A 247-amino-acid polypeptide reads, in one-letter code: Probable transcriptional regulatory protein HRM2_04000 (247 aa).

The protein belongs to the TACO1 family.

The protein resides in the cytoplasm. This chain is Probable transcriptional regulatory protein HRM2_04000, found in Desulforapulum autotrophicum (strain ATCC 43914 / DSM 3382 / VKM B-1955 / HRM2) (Desulfobacterium autotrophicum).